Reading from the N-terminus, the 402-residue chain is Arginine deiminase (402 aa).

Catalysis depends on cysteine 392, which acts as the Amidino-cysteine intermediate.

It belongs to the arginine deiminase family.

It is found in the cytoplasm. The enzyme catalyses L-arginine + H2O = L-citrulline + NH4(+). It functions in the pathway amino-acid degradation; L-arginine degradation via ADI pathway; carbamoyl phosphate from L-arginine: step 1/2. This is Arginine deiminase from Mycobacterium avium (strain 104).